The sequence spans 304 residues: Release factor glutamine methyltransferase (304 aa).

S-adenosyl-L-methionine is bound by residues Asp144 and Asn188. 188–191 (NPPY) is a binding site for substrate.

The protein belongs to the protein N5-glutamine methyltransferase family. PrmC subfamily.

It carries out the reaction L-glutaminyl-[peptide chain release factor] + S-adenosyl-L-methionine = N(5)-methyl-L-glutaminyl-[peptide chain release factor] + S-adenosyl-L-homocysteine + H(+). In terms of biological role, methylates the class 1 translation termination release factors RF1/PrfA and RF2/PrfB on the glutamine residue of the universally conserved GGQ motif. In Mycobacterium tuberculosis (strain CDC 1551 / Oshkosh), this protein is Release factor glutamine methyltransferase.